The sequence spans 391 residues: uncharacterized protein (391 aa).

Transmembrane regions (helical) follow at residues 7 to 27 (FILV…LPVI), 39 to 59 (AING…SPFM), 66 to 88 (LGFK…GFIW), 92 to 111 (VWVW…MLHF), 131 to 151 (SIYG…VPLV), 156 to 176 (SLPF…VFFL), 197 to 217 (FYQA…YGFL), 239 to 259 (VAII…PLGI), 269 to 289 (VLLV…VFPS), 292 to 312 (VIGG…TLGI), 329 to 349 (LLCG…GGWY), and 356 to 376 (ANLF…LVLG).

It belongs to the major facilitator superfamily.

The protein resides in the cell membrane. This is an uncharacterized protein from Bacillus subtilis (strain 168).